The following is a 571-amino-acid chain: 2-succinyl-5-enolpyruvyl-6-hydroxy-3-cyclohexene-1-carboxylate synthase (571 aa).

This sequence belongs to the TPP enzyme family. MenD subfamily. As to quaternary structure, homodimer. Mg(2+) serves as cofactor. Mn(2+) is required as a cofactor. It depends on thiamine diphosphate as a cofactor.

The catalysed reaction is isochorismate + 2-oxoglutarate + H(+) = 5-enolpyruvoyl-6-hydroxy-2-succinyl-cyclohex-3-ene-1-carboxylate + CO2. It functions in the pathway quinol/quinone metabolism; 1,4-dihydroxy-2-naphthoate biosynthesis; 1,4-dihydroxy-2-naphthoate from chorismate: step 2/7. It participates in quinol/quinone metabolism; menaquinone biosynthesis. Functionally, catalyzes the thiamine diphosphate-dependent decarboxylation of 2-oxoglutarate and the subsequent addition of the resulting succinic semialdehyde-thiamine pyrophosphate anion to isochorismate to yield 2-succinyl-5-enolpyruvyl-6-hydroxy-3-cyclohexene-1-carboxylate (SEPHCHC). The chain is 2-succinyl-5-enolpyruvyl-6-hydroxy-3-cyclohexene-1-carboxylate synthase from Vibrio parahaemolyticus serotype O3:K6 (strain RIMD 2210633).